The chain runs to 383 residues: GA-binding protein subunit beta-1 (383 aa).

Ser2 carries the post-translational modification N-acetylserine. 2 ANK repeats span residues 5-34 (DLGK…PFTT) and 37-66 (LGTS…SRDA). Residue Lys69 is modified to N6-acetyllysine. 3 ANK repeats span residues 70–99 (VDRT…DVNA), 103–132 (LKMT…DVHT), and 136–166 (FCKT…QINT). N6-acetyllysine is present on residues Lys340 and Lys369.

In terms of assembly, heterotetramer of two alpha and two beta subunits. Interacts with HCFC1, causing repression of transcriptional activity. Post-translationally, acetylated by EP300/p300. Deacetylated by SIRT7, promoting heterotetramerization and activity.

Its subcellular location is the nucleus. Functionally, transcription factor capable of interacting with purine rich repeats (GA repeats). Acts as a master regulator of nuclear-encoded mitochondrial genes. The protein is GA-binding protein subunit beta-1 (GABPB1) of Bos taurus (Bovine).